Reading from the N-terminus, the 123-residue chain is MTTIQQLIRKKRKPIENKTKSPALRNCPQRRGVCIRVYTTTPKKPNSALRKVARVRLTSSFEVTAYIPGIGHNLQEHSVVLVRGGRVKDLPGVRYHIVRGTLDTIGVKDRCQGRSKYGTKRPK.

It belongs to the universal ribosomal protein uS12 family. In terms of assembly, part of the 30S ribosomal subunit.

Its subcellular location is the plastid. It is found in the chloroplast. With S4 and S5 plays an important role in translational accuracy. Located at the interface of the 30S and 50S subunits. This Chara vulgaris (Common stonewort) protein is Small ribosomal subunit protein uS12c (rps12).